Here is a 305-residue protein sequence, read N- to C-terminus: tRNA dimethylallyltransferase (305 aa).

An ATP-binding site is contributed by 13–20; it reads GPTSSGKT. 15–20 serves as a coordination point for substrate; that stretch reads TSSGKT. The interval 39 to 42 is interaction with substrate tRNA; sequence DSKQ.

This sequence belongs to the IPP transferase family. Monomer. Mg(2+) is required as a cofactor.

It catalyses the reaction adenosine(37) in tRNA + dimethylallyl diphosphate = N(6)-dimethylallyladenosine(37) in tRNA + diphosphate. Its function is as follows. Catalyzes the transfer of a dimethylallyl group onto the adenine at position 37 in tRNAs that read codons beginning with uridine, leading to the formation of N6-(dimethylallyl)adenosine (i(6)A). This is tRNA dimethylallyltransferase from Neorickettsia sennetsu (strain ATCC VR-367 / Miyayama) (Ehrlichia sennetsu).